Reading from the N-terminus, the 834-residue chain is Glycerol-3-phosphate acyltransferase (834 aa).

The HXXXXD motif motif lies at 309-314 (CHRSHI).

It belongs to the GPAT/DAPAT family.

It is found in the cell inner membrane. The enzyme catalyses sn-glycerol 3-phosphate + an acyl-CoA = a 1-acyl-sn-glycero-3-phosphate + CoA. The protein operates within phospholipid metabolism; CDP-diacylglycerol biosynthesis; CDP-diacylglycerol from sn-glycerol 3-phosphate: step 1/3. The protein is Glycerol-3-phosphate acyltransferase of Pseudomonas aeruginosa (strain UCBPP-PA14).